Reading from the N-terminus, the 464-residue chain is MSASLLEKQSTGGAIARVGFEYQDAFVLKNLPLWLSESAFSHIVSESIGDVEVCYFSLEKDFQRVMYEAKNHSLTSTDFWKEIKRFKEAFDIPSSEFTRFGLVCPLYTSTLHPFLAQIERIRGVGSSYSADSVILQKSRQDITQWCSDKGFETSLAEFALDHVDFLSFNAEDSDSVFIGEIEEKLSNIELTTRKAKQLRDQFKNLISRSSFGPIHRKDFENFICHALEEDRTQWLSDPIKINLSASSSQHQDLNLDISDFNGPDRAQKTSSDWNSLIKKAVSIGDFIHNSGDRRTLLIDGKQRMSTACMLGYVFSATRNFLLEIEHNGLAYRTDDHKQKEGQFFNKTNSIELHGKTEAIVTIGFPTAIGKDIDSTINEIKNLPRLNLESSNVIDNMETLNLAVKEAKSALVSFKAENKLSKLHLFIKAPSVFAMVLGHRLNGVCNIQLYDWVNGEYMPTAELNI.

The N-terminal endonuclease domain stretch occupies residues 1 to 228 (MSASLLEKQS…FENFICHALE (228 aa)). The segment at 229–464 (EDRTQWLSDP…EYMPTAELNI (236 aa)) is C-terminal SAVED domain.

Belongs to the Cap4 nuclease family. In terms of assembly, a monomer in the absence of cAAA, in its presence it forms oligomers.

DNase activity is activated upon ligand binding. In terms of biological role, effector DNase of a CBASS antivirus system. CBASS (cyclic oligonucleotide-based antiphage signaling system) provides immunity against bacteriophage. The CD-NTase protein synthesizes cyclic nucleotides in response to infection; these serve as specific second messenger signals. The signals activate a diverse range of effectors, leading to bacterial cell death and thus abortive phage infection. A type II-C CBASS system. Probably in the presence of its endogenous cyclic nucleotide (synthesized by the cognate CD-NTase protein in the CBASS operon), or of 2',3',3'-cyclic AMP-AMP-AMP (cAAA) synthesized by Acinetobacter sp. ATCC 27244, endonucleolytically degrades dsDNA in a non-sequence specific manner. It is not activated by other cyclic nucleotides. The protein is CD-NTase-associated protein 4 of Moraxella osloensis.